The primary structure comprises 906 residues: NACHT, LRR and PYD domains-containing protein 1b allele 4 (906 aa).

The disordered stretch occupies residues 1–22 (MEESPPKQKSNTKVAQHEGQQD). One can recognise an NACHT domain in the interval 126–435 (QLVIIEGAAG…EFFAAISCIL (310 aa)). 132-139 (GAAGIGKS) lines the ATP pocket. LRR repeat units lie at residues 627–647 (NLEG…QSLC) and 684–704 (SLTE…RMLC). Residues 789-906 (FWGPTGPVAT…FQEHGSRNAR (118 aa)) form the FIIND (incomplete) domain.

It belongs to the NLRP family. Expressed in macrophages.

The protein localises to the cytoplasm. It localises to the cytosol. Its function is as follows. Probable inactive allele of Nlrp1b, which lacks a CARD domain, suggesting that it is not able to form an inflammasome. Contrary to Nlrp1b allele 1, allele 4 is not activated by B.anthracis lethal toxin and no other activation signal is reported. This Mus musculus (Mouse) protein is NACHT, LRR and PYD domains-containing protein 1b allele 4.